Consider the following 493-residue polypeptide: Ketol-acid reductoisomerase (NADP(+)) (493 aa).

The 195-residue stretch at 14-208 (LDQLGRCRFM…GGDRAGVLES (195 aa)) folds into the KARI N-terminal Rossmann domain. Residues 45-48 (CGAQ), R68, R76, S78, and 108-110 (DKQ) contribute to the NADP(+) site. Residue H132 is part of the active site. G158 is an NADP(+) binding site. KARI C-terminal knotted domains are found at residues 209–345 (SFVA…APKA) and 346–486 (DGIK…MTDM). Residues D217, E221, E390, and E394 each contribute to the Mg(2+) site. Residue S415 coordinates substrate.

It belongs to the ketol-acid reductoisomerase family. It depends on Mg(2+) as a cofactor.

The catalysed reaction is (2R)-2,3-dihydroxy-3-methylbutanoate + NADP(+) = (2S)-2-acetolactate + NADPH + H(+). The enzyme catalyses (2R,3R)-2,3-dihydroxy-3-methylpentanoate + NADP(+) = (S)-2-ethyl-2-hydroxy-3-oxobutanoate + NADPH + H(+). The protein operates within amino-acid biosynthesis; L-isoleucine biosynthesis; L-isoleucine from 2-oxobutanoate: step 2/4. It functions in the pathway amino-acid biosynthesis; L-valine biosynthesis; L-valine from pyruvate: step 2/4. Its function is as follows. Involved in the biosynthesis of branched-chain amino acids (BCAA). Catalyzes an alkyl-migration followed by a ketol-acid reduction of (S)-2-acetolactate (S2AL) to yield (R)-2,3-dihydroxy-isovalerate. In the isomerase reaction, S2AL is rearranged via a Mg-dependent methyl migration to produce 3-hydroxy-3-methyl-2-ketobutyrate (HMKB). In the reductase reaction, this 2-ketoacid undergoes a metal-dependent reduction by NADPH to yield (R)-2,3-dihydroxy-isovalerate. The polypeptide is Ketol-acid reductoisomerase (NADP(+)) (Mannheimia succiniciproducens (strain KCTC 0769BP / MBEL55E)).